The following is a 953-amino-acid chain: 26S proteasome non-ATPase regulatory subunit 1 (953 aa).

Position 1 is an N-acetylmethionine (M1). Phosphothreonine is present on T273. The tract at residues 279–318 is disordered; the sequence is PGSTNTGTVPGSEKDSDSMETEEKTSSAFVGKTPEASPEP. S290 is modified (phosphoserine). Residues 290-303 are compositionally biased toward basic and acidic residues; that stretch reads SEKDSDSMETEEKT. At K310 the chain carries N6-acetyllysine. T311 carries the phosphothreonine modification. S315 carries the post-translational modification Phosphoserine. PC repeat units lie at residues 403–436, 441–474, 476–510, 511–545, 547–580, 581–616, 617–649, 651–685, 686–726, and 729–761; these read TATASLGVIHKGHEKEALQLMATYLPKDTSPGSA, GGLYALGLIHANHGGDIIDYLLNQLKNASNDIVR, GGSLGLGLAAMGTARQDVYDLLKTNLYQDDAVTGE, AAGLALGLVMLGSKNAQAIEDMVGYAQETQHEKIL, GLAVGIALVMYGRMEEADALIESLCRDKDPILRR, SGMYTVAMAYCGSGNNKAIRRLLHVAVSDVNDDVRR, AAVESLGFILFRTPEQCPSVVSLLSESYNPHVR, GAAMALGICCAGTGNKEAINLLEPMTNDPVNYVRQ, GALI…DVMA, and GAILAQGILDAGGHNVTISLQSRTGHTHMPSVV. K720 is modified (N6-acetyllysine). Residue T830 is modified to Phosphothreonine. Residue S834 is modified to Phosphoserine. Disordered regions lie at residues 839–881 and 930–953; these read AKKK…LDNP and AHGPKIEEEEQEPEPPEPFEYIDD. Composition is skewed to basic and acidic residues over residues 842-852 and 859-872; these read KEKEKEKKEEE and AEKKEEKEKKKEPE. The segment covering 936–953 has biased composition (acidic residues); sequence EEEEQEPEPPEPFEYIDD.

Belongs to the proteasome subunit S1 family. Component of the 19S proteasome regulatory particle complex. The 26S proteasome consists of a 20S core particle (CP) and two 19S regulatory subunits (RP). The regulatory particle is made of a lid composed of 9 subunits, a base containing 6 ATPases and few additional components including PSMD1. Interacts with ADRM1. Interacts with ZFAND1.

Component of the 26S proteasome, a multiprotein complex involved in the ATP-dependent degradation of ubiquitinated proteins. This complex plays a key role in the maintenance of protein homeostasis by removing misfolded or damaged proteins, which could impair cellular functions, and by removing proteins whose functions are no longer required. Therefore, the proteasome participates in numerous cellular processes, including cell cycle progression, apoptosis, or DNA damage repair. This chain is 26S proteasome non-ATPase regulatory subunit 1 (PSMD1), found in Homo sapiens (Human).